The chain runs to 116 residues: NADH-ubiquinone oxidoreductase chain 3 (116 aa).

The next 3 helical transmembrane spans lie at 3–23, 56–76, and 87–107; these read LIMT…TVSF, FFLV…LLPL, and GTFF…IYEW.

It belongs to the complex I subunit 3 family.

It is found in the mitochondrion membrane. The catalysed reaction is a ubiquinone + NADH + 5 H(+)(in) = a ubiquinol + NAD(+) + 4 H(+)(out). Functionally, core subunit of the mitochondrial membrane respiratory chain NADH dehydrogenase (Complex I) that is believed to belong to the minimal assembly required for catalysis. Complex I functions in the transfer of electrons from NADH to the respiratory chain. The immediate electron acceptor for the enzyme is believed to be ubiquinone. The chain is NADH-ubiquinone oxidoreductase chain 3 (MT-ND3) from Carassius auratus (Goldfish).